The chain runs to 429 residues: Phosphoribosylamine--glycine ligase (429 aa).

Positions 109-316 (KDFLARHKIP…LVELCLAACE (208 aa)) constitute an ATP-grasp domain. Position 135–196 (135–196 (LREKGAPIVI…EEFLDGEEAS (62 aa))) interacts with ATP. A disordered region spans residues 212-236 (SQDHKRVGDKDTGPNTGGMGAYSPA). The segment covering 213–223 (QDHKRVGDKDT) has biased composition (basic and acidic residues). Mg(2+)-binding residues include Glu286 and Asn288.

It belongs to the GARS family. In terms of assembly, monomer. Requires Mg(2+) as cofactor. Mn(2+) serves as cofactor.

The catalysed reaction is 5-phospho-beta-D-ribosylamine + glycine + ATP = N(1)-(5-phospho-beta-D-ribosyl)glycinamide + ADP + phosphate + H(+). Its pathway is purine metabolism; IMP biosynthesis via de novo pathway; N(1)-(5-phospho-D-ribosyl)glycinamide from 5-phospho-alpha-D-ribose 1-diphosphate: step 2/2. Functionally, catalyzes the reversible conversion of phosphoribosylamine to glycinamide ribonucleotide, an enzymatic step in purine biosynthesis pathway. This chain is Phosphoribosylamine--glycine ligase (purD), found in Escherichia coli (strain K12).